Consider the following 524-residue polypeptide: Tubulin-specific chaperone E (524 aa).

Ser2 bears the N-acetylserine mark. Residues Gly27–Arg71 enclose the CAP-Gly domain. LRR repeat units lie at residues Asn154–Ala175, Asp180–Thr201, Thr206–Pro227, Val231–Gln253, Lys254–Ala275, Arg279–Ile300, and Ala309–Asp330. Positions Asn343–Asp381 constitute an LRRCT domain. Lys460 carries the post-translational modification N6-acetyllysine. Ser492 carries the phosphoserine modification.

Belongs to the TBCE family. In terms of assembly, supercomplex made of cofactors A to E. Cofactors A and D function by capturing and stabilizing tubulin in a quasi-native conformation. Cofactor E binds to the cofactor D-tubulin complex; interaction with cofactor C then causes the release of tubulin polypeptides that are committed to the native state. Cofactors B and E can form a heterodimer which binds to alpha-tubulin and enhances their ability to dissociate tubulin heterodimers. Interacts with TBCD. As to expression, ubiquitously expressed.

It is found in the cytoplasm. It localises to the cytoskeleton. In terms of biological role, tubulin-folding protein; involved in the second step of the tubulin folding pathway and in the regulation of tubulin heterodimer dissociation. Required for correct organization of microtubule cytoskeleton and mitotic splindle, and maintenance of the neuronal microtubule network. This is Tubulin-specific chaperone E (Tbce) from Mus musculus (Mouse).